A 570-amino-acid polypeptide reads, in one-letter code: Glycine--tRNA ligase (570 aa).

Substrate is bound by residues R99 and E165. ATP is bound by residues 197–199, 207–212, 324–325, and 443–446; these read RNE, LRLREF, EC, and GIDR. 212–216 serves as a coordination point for substrate; that stretch reads FTQAE. 439–443 is a substrate binding site; the sequence is EPSFG.

It belongs to the class-II aminoacyl-tRNA synthetase family.

The protein localises to the cytoplasm. The enzyme catalyses tRNA(Gly) + glycine + ATP = glycyl-tRNA(Gly) + AMP + diphosphate. Its function is as follows. Catalyzes the attachment of glycine to tRNA(Gly). This chain is Glycine--tRNA ligase, found in Thermococcus gammatolerans (strain DSM 15229 / JCM 11827 / EJ3).